A 299-amino-acid chain; its full sequence is Oxygen-dependent coproporphyrinogen-III oxidase (299 aa).

Residue S92 participates in substrate binding. A divalent metal cation contacts are provided by H96 and H106. The active-site Proton donor is the H106. 108–110 (NVR) serves as a coordination point for substrate. A divalent metal cation is bound by residues H145 and H175. The segment at 240-275 (YVEFNLVWDRGTLFGLQTGGRTESILMSMPPLVRWE) is important for dimerization. A substrate-binding site is contributed by 258–260 (GGR).

This sequence belongs to the aerobic coproporphyrinogen-III oxidase family. In terms of assembly, homodimer. It depends on a divalent metal cation as a cofactor.

Its subcellular location is the cytoplasm. The catalysed reaction is coproporphyrinogen III + O2 + 2 H(+) = protoporphyrinogen IX + 2 CO2 + 2 H2O. It functions in the pathway porphyrin-containing compound metabolism; protoporphyrin-IX biosynthesis; protoporphyrinogen-IX from coproporphyrinogen-III (O2 route): step 1/1. In terms of biological role, involved in the heme biosynthesis. Catalyzes the aerobic oxidative decarboxylation of propionate groups of rings A and B of coproporphyrinogen-III to yield the vinyl groups in protoporphyrinogen-IX. This Salmonella schwarzengrund (strain CVM19633) protein is Oxygen-dependent coproporphyrinogen-III oxidase.